The chain runs to 277 residues: Phosphonates import ATP-binding protein PhnC (277 aa).

Residues 3–251 (IKLDKVSARH…RLQALYAQHL (249 aa)) enclose the ABC transporter domain. ATP is bound at residue 40 to 47 (GPSGAGKT).

This sequence belongs to the ABC transporter superfamily. Phosphonates importer (TC 3.A.1.9.1) family. As to quaternary structure, the complex is composed of two ATP-binding proteins (PhnC), two transmembrane proteins (PhnE) and a solute-binding protein (PhnD).

It localises to the cell inner membrane. It catalyses the reaction phosphonate(out) + ATP + H2O = phosphonate(in) + ADP + phosphate + H(+). Functionally, part of the ABC transporter complex PhnCDE involved in phosphonates import. Responsible for energy coupling to the transport system. The chain is Phosphonates import ATP-binding protein PhnC from Polaromonas sp. (strain JS666 / ATCC BAA-500).